The chain runs to 161 residues: Phosphopantetheine adenylyltransferase (161 aa).

T9 is a substrate binding site. ATP is bound by residues 9-10 (TF) and H17. K41, L73, and R87 together coordinate substrate. ATP-binding positions include 88-90 (GMR), E98, and 123-129 (WSYVSST).

It belongs to the bacterial CoaD family. Homohexamer. Mg(2+) serves as cofactor.

It localises to the cytoplasm. It carries out the reaction (R)-4'-phosphopantetheine + ATP + H(+) = 3'-dephospho-CoA + diphosphate. Its pathway is cofactor biosynthesis; coenzyme A biosynthesis; CoA from (R)-pantothenate: step 4/5. Functionally, reversibly transfers an adenylyl group from ATP to 4'-phosphopantetheine, yielding dephospho-CoA (dPCoA) and pyrophosphate. The polypeptide is Phosphopantetheine adenylyltransferase (Actinobacillus succinogenes (strain ATCC 55618 / DSM 22257 / CCUG 43843 / 130Z)).